Reading from the N-terminus, the 155-residue chain is Endoribonuclease YbeY (155 aa).

3 residues coordinate Zn(2+): His114, His118, and His124.

It belongs to the endoribonuclease YbeY family. Zn(2+) serves as cofactor.

The protein localises to the cytoplasm. Single strand-specific metallo-endoribonuclease involved in late-stage 70S ribosome quality control and in maturation of the 3' terminus of the 16S rRNA. This chain is Endoribonuclease YbeY, found in Buchnera aphidicola subsp. Acyrthosiphon pisum (strain APS) (Acyrthosiphon pisum symbiotic bacterium).